The following is a 450-amino-acid chain: Bicarbonate-binding protein CmpA (450 aa).

Residues 1–36 (MNEFQPVNRRQFLFTLGATAASAILLKGCGNPPSSS) constitute a signal peptide (tat-type signal).

This sequence belongs to the CmpA/NrtA family. In terms of assembly, the complex is composed of two ATP-binding proteins (CmpC and CmpD), a transmembrane protein (CmpB) and a solute-binding protein (CmpA). In terms of processing, predicted to be exported by the Tat system. The position of the signal peptide cleavage has not been experimentally proven. Post-translationally, the N-terminus is blocked.

The protein resides in the cell inner membrane. In terms of biological role, part of the ABC transporter complex CmpABCD involved in bicarbonate transport. Binds bicarbonate with high affinity. This is Bicarbonate-binding protein CmpA (cmpA) from Synechococcus elongatus (strain ATCC 33912 / PCC 7942 / FACHB-805) (Anacystis nidulans R2).